A 164-amino-acid polypeptide reads, in one-letter code: Peptidyl-prolyl cis-trans isomerase A-like 4C (164 aa).

The 157-residue stretch at 7-163 folds into the PPIase cyclophilin-type domain; that stretch reads FFDITVDGKP…KKITIADCGQ (157 aa).

It belongs to the cyclophilin-type PPIase family. PPIase A subfamily.

The protein localises to the cytoplasm. The enzyme catalyses [protein]-peptidylproline (omega=180) = [protein]-peptidylproline (omega=0). Its function is as follows. PPIases accelerate the folding of proteins. It catalyzes the cis-trans isomerization of proline imidic peptide bonds in oligopeptides. In Homo sapiens (Human), this protein is Peptidyl-prolyl cis-trans isomerase A-like 4C.